Reading from the N-terminus, the 342-residue chain is uncharacterized protein (342 aa).

9–31 (LIFGGTTGIGLMTTIDFIIHNTS) serves as a coordination point for NADP(+). Ser-208 contributes to the substrate binding site. The active-site Proton acceptor is the Tyr-222.

The protein belongs to the short-chain dehydrogenases/reductases (SDR) family.

This is an uncharacterized protein from Acanthamoeba polyphaga (Amoeba).